A 106-amino-acid chain; its full sequence is Small ribosomal subunit protein bS18 (106 aa).

Residues 1-22 (MSEETTVRPERTERSERPERPQ) show a composition bias toward basic and acidic residues. Positions 1–34 (MSEETTVRPERTERSERPERPQYRGNGPRKRRPF) are disordered.

It belongs to the bacterial ribosomal protein bS18 family. In terms of assembly, part of the 30S ribosomal subunit. Forms a tight heterodimer with protein bS6.

In terms of biological role, binds as a heterodimer with protein bS6 to the central domain of the 16S rRNA, where it helps stabilize the platform of the 30S subunit. This is Small ribosomal subunit protein bS18 from Geobacter metallireducens (strain ATCC 53774 / DSM 7210 / GS-15).